A 296-amino-acid polypeptide reads, in one-letter code: Ribose import binding protein RbsB (296 aa).

An N-terminal signal peptide occupies residues 1–25 (MNMKKLATLVSAVALSATVSANAMA).

Belongs to the bacterial solute-binding protein 2 family. The complex is composed of an ATP-binding protein (RbsA), two transmembrane proteins (RbsC) and a solute-binding protein (RbsB).

It localises to the periplasm. Part of the ABC transporter complex RbsABC involved in ribose import. Binds ribose. Also serves as the primary chemoreceptor for chemotaxis. In Escherichia coli (strain K12), this protein is Ribose import binding protein RbsB.